The chain runs to 368 residues: Propane 2-monooxygenase, hydroxylase component small subunit (368 aa).

This sequence belongs to the TmoE/XamoE family. As to quaternary structure, the propane 2-monooxygenase multicomponent enzyme system is composed of an electron transfer component and a monooxygenase component interacting with the effector protein MimD. The electron transfer component is composed of a reductase (MimB), and the monooxygenase component is formed by a large subunit (MimA) and a small subunit (MimC). Requires the presence of the chaperonin-like protein MimG to ensure a productive folding, resulting of a soluble MimC, which leads to the active form of MimABCD.

The catalysed reaction is propane + NADH + O2 + H(+) = propan-2-ol + NAD(+) + H2O. The enzyme catalyses acetone + NADH + O2 + H(+) = hydroxyacetone + NAD(+) + H2O. It carries out the reaction butan-2-one + NADH + O2 + H(+) = 1-hydroxy-2-butanone + NAD(+) + H2O. It catalyses the reaction phenol + NADH + O2 + H(+) = hydroquinone + NAD(+) + H2O. In terms of biological role, component of the propane 2-monooxygenase multicomponent enzyme system which is involved in the degradation of propane via the O2-dependent hydroxylation of propane. Also involved in the degradation of acetone via the O2-dependent hydroxylation of acetone. Also able to catalyze the oxidation of phenol, methylethylketone (2-butanone), 1-propanol and 2-propanol. This is Propane 2-monooxygenase, hydroxylase component small subunit from Mycolicibacterium goodii (Mycobacterium goodii).